The primary structure comprises 263 residues: Inner membrane protein YpjD (263 aa).

The Periplasmic segment spans residues 1–3; the sequence is MPV. The helical transmembrane segment at 4–23 threads the bilayer; the sequence is FALLALVAYSVSLALIVPGL. Topologically, residues 24 to 34 are cytoplasmic; the sequence is LQKNGGWRRMA. Residues 35–54 traverse the membrane as a helical segment; the sequence is IISAVIALVCHAIALEARIL. Over 55–63 the chain is Periplasmic; it reads PDGDSGQNL. The chain crosses the membrane as a helical span at residues 64 to 83; it reads SLLNVGSLVSLMICTVMTIV. Residues 84–89 are Cytoplasmic-facing; sequence ASRNRG. Residues 90-109 form a helical membrane-spanning segment; sequence WLLLPIVYAFALINLALATF. The Periplasmic portion of the chain corresponds to 110–123; that stretch reads MPNEYITHLEATPG. The chain crosses the membrane as a helical span at residues 124–146; sequence MLVHIGLSLFSYATLIIAALYAL. At 147-181 the chain is on the cytoplasmic side; the sequence is QLAWIDYQLKNKKLAFNQEMPPLMSIERKMFHITQ. Residues 182 to 201 traverse the membrane as a helical segment; it reads IGVVLLTLTLCTGLFYMHNL. The Periplasmic segment spans residues 202 to 210; sequence FSMENIDKA. The chain crosses the membrane as a helical span at residues 211–228; that stretch reads VLSIVAWFVYIVLLWGHY. Topologically, residues 229 to 236 are cytoplasmic; it reads HEGWRGRR. Residues 237-259 traverse the membrane as a helical segment; sequence VVWFNVAGAVILTLAYFGSRIVQ. Topologically, residues 260–263 are periplasmic; that stretch reads QLIS.

The protein resides in the cell inner membrane. The protein is Inner membrane protein YpjD (ypjD) of Escherichia coli O157:H7.